A 790-amino-acid chain; its full sequence is Chorion peroxidase (790 aa).

A signal peptide spans 1 to 16 (MAKKVLLLSLYSAVLS). Residues 17-209 (TWFGFGYVQC…ARIPRAIRKR (193 aa)) constitute a propeptide that is removed on maturation. Cys-210 carries the N-acetylcysteine; in Chorion peroxidase light chain modification. A disulfide bridge links Cys-216 with Cys-229. Trp-259 carries an N-linked (Man) tryptophan glycan. Catalysis depends on His-305, which acts as the Proton acceptor. An N-linked (GlcNAc...) asparagine glycan is attached at Asn-327. Tyr-353 bears the 3',4'-dihydroxyphenylalanine mark. Cysteines 433 and 440 form a disulfide. An N-linked (Man) tryptophan glycan is attached at Trp-479. His-551 is a binding site for heme b. Trp-680 carries an N-linked (Man) tryptophan glycan. A disulfide bridge connects residues Cys-746 and Cys-774. The N-linked (Man) tryptophan glycan is linked to Trp-785.

It belongs to the peroxidase family. XPO subfamily. Heterodimer. It depends on heme b as a cofactor. N-glycosylated on Trp by mannose and on Asn by N-acetylglucosamine. Post-translationally, there is a hexose glycosylation of an unidentified residue between 654 and 708; Trp-680 is conserved in closely related species and is probably mannosylated.

Its subcellular location is the secreted. The catalysed reaction is 2 a phenolic donor + H2O2 = 2 a phenolic radical donor + 2 H2O. Extremely resistant to denaturating agents, such as SDS and organic solvents. Involved in the formation of a rigid and insoluble egg chorion by catalyzing chorion protein cross-linking through dityrosine formation and phenol oxidase-catalyzed chorion melanization. The chain is Chorion peroxidase (pxt) from Aedes aegypti (Yellowfever mosquito).